A 648-amino-acid chain; its full sequence is 60 kDa heat shock protein homolog 1, mitochondrial (648 aa).

The N-terminal 55 residues, 1–55, are a transit peptide targeting the mitochondrion; that stretch reads MFRSCVPKAITSSRCFARMYSKDVRFGSGVRAMMIRGVDILADAVAVTMGPKGRS.

Belongs to the chaperonin (HSP60) family.

Its subcellular location is the mitochondrion matrix. Its function is as follows. Prevents misfolding and promotes the refolding and proper assembly of unfolded polypeptides generated under stress conditions. The chain is 60 kDa heat shock protein homolog 1, mitochondrial (Hsp60B) from Drosophila melanogaster (Fruit fly).